We begin with the raw amino-acid sequence, 1255 residues long: Bifunctional autolysin (1255 aa).

Positions 1-36 (MLGVINRMAKKFNYKLPSMVALTLVGSAVTAHQVQA) are cleaved as a signal peptide. Disordered regions lie at residues 110–141 (GDTRANQSATTNNTQPVAKSTSTTAPKTNTNV) and 193–218 (VTTFSASAQPRSVAATPKTSLPKYKP). The interval 199 to 775 (SAQPRSVAAT…VAQPKTAVKA (577 aa)) is N-acetylmuramoyl-L-alanine amidase. GW domains follow at residues 442–516 (TVAA…YNTA), 518–592 (SPVN…DTAK), 611–685 (TVSS…YNNA), 687–761 (SPVN…VPAA), 783–858 (TTQT…VQNL), 860–935 (KEVK…APTA), and 942–1016 (AAKD…KELI). Residues 776 to 1255 (YTVTKPQTTQ…GKYFDIPQYK (480 aa)) form an endo-beta-N-acetylglucosaminidase region.

It in the N-terminal section; belongs to the N-acetylmuramoyl-L-alanine amidase 2 family. In the C-terminal section; belongs to the glycosyl hydrolase 73 family. As to quaternary structure, oligomer; forms a ring structure at the cell surface which is important for efficient partitioning of daughter cells after cell division. Undergoes proteolytic processing to generate the two extracellular lytic enzymes, probably at the septal region on the cell surface.

The protein localises to the secreted. The catalysed reaction is Hydrolyzes the link between N-acetylmuramoyl residues and L-amino acid residues in certain cell-wall glycopeptides.. It carries out the reaction an N(4)-(oligosaccharide-(1-&gt;3)-[oligosaccharide-(1-&gt;6)]-beta-D-Man-(1-&gt;4)-beta-D-GlcNAc-(1-&gt;4)-alpha-D-GlcNAc)-L-asparaginyl-[protein] + H2O = an oligosaccharide-(1-&gt;3)-[oligosaccharide-(1-&gt;6)]-beta-D-Man-(1-&gt;4)-D-GlcNAc + N(4)-(N-acetyl-beta-D-glucosaminyl)-L-asparaginyl-[protein]. Functionally, endohydrolysis of the di-N-acetylchitobiosyl unit in high-mannose glycopeptides and glycoproteins containing the -[(Man)5(GlcNAc)2]-Asn structure. One N-acetyl-D-glucosamine residue remains attached to the protein; the rest of the oligosaccharide is released intact. Cleaves the peptidoglycan connecting the daughter cells at the end of the cell division cycle, resulting in the separation of the two newly divided cells. Acts as an autolysin in penicillin-induced lysis. The polypeptide is Bifunctional autolysin (atl) (Staphylococcus aureus (strain Mu3 / ATCC 700698)).